Consider the following 479-residue polypeptide: Anaerobic nitric oxide reductase flavorubredoxin (479 aa).

The zinc metallo-hydrolase stretch occupies residues 30-210 (LRGSSYNSYL…PFSRLVTPKI (181 aa)). Fe cation contacts are provided by His-79, Glu-81, Asp-83, His-147, Asp-166, and His-227. The 140-residue stretch at 254-393 (ITIFYDTMSN…LCREHGREIA (140 aa)) folds into the Flavodoxin-like domain. Residues 260-264 (TMSNN) and 342-369 (AFGS…EMSL) contribute to the FMN site. A Rubredoxin-like domain is found at 423-474 (GPRMQCSVCQWIYDPAKGEPMQDVAPGTPWSEVPDNFLCPECSLGKDVFEEL). 4 residues coordinate Fe cation: Cys-428, Cys-431, Cys-461, and Cys-464.

The protein in the N-terminal section; belongs to the zinc metallo-hydrolase group 3 family. As to quaternary structure, homotetramer. It depends on Fe cation as a cofactor. FMN serves as cofactor.

Its subcellular location is the cytoplasm. It participates in nitrogen metabolism; nitric oxide reduction. Functionally, anaerobic nitric oxide reductase; uses NADH to detoxify nitric oxide (NO), protecting several 4Fe-4S NO-sensitive enzymes. Has at least 2 reductase partners, only one of which (NorW, flavorubredoxin reductase) has been identified. NO probably binds to the di-iron center; electrons enter from the NorW at rubredoxin and are transferred sequentially to the FMN center and the di-iron center. Also able to function as an aerobic oxygen reductase. The polypeptide is Anaerobic nitric oxide reductase flavorubredoxin (Shigella boydii serotype 4 (strain Sb227)).